The following is a 432-amino-acid chain: Eukaryotic translation initiation factor 3 subunit E (432 aa).

One can recognise a PCI domain in the interval 221-401 (VYYNYPKGRD…MGVKSVSIHE (181 aa)).

It belongs to the eIF-3 subunit E family. Component of the eukaryotic translation initiation factor 3 (eIF-3) complex.

The protein localises to the cytoplasm. In terms of biological role, component of the eukaryotic translation initiation factor 3 (eIF-3) complex, which is involved in protein synthesis of a specialized repertoire of mRNAs and, together with other initiation factors, stimulates binding of mRNA and methionyl-tRNAi to the 40S ribosome. The eIF-3 complex specifically targets and initiates translation of a subset of mRNAs involved in cell proliferation. This chain is Eukaryotic translation initiation factor 3 subunit E, found in Caenorhabditis elegans.